A 153-amino-acid polypeptide reads, in one-letter code: Ribosome maturation factor RimP (153 aa).

It belongs to the RimP family.

The protein localises to the cytoplasm. Its function is as follows. Required for maturation of 30S ribosomal subunits. The polypeptide is Ribosome maturation factor RimP (Psychromonas ingrahamii (strain DSM 17664 / CCUG 51855 / 37)).